The primary structure comprises 361 residues: Molybdenum import ATP-binding protein ModC 1 (361 aa).

Residues 1–237 (MPADGIRARF…LDLPTAFHED (237 aa)) form the ABC transporter domain. Residue 35-42 (GHSGSGKT) participates in ATP binding. The Mop domain occupies 296 to 361 (DSSITNVLPA…AQIKAVALLG (66 aa)).

This sequence belongs to the ABC transporter superfamily. Molybdate importer (TC 3.A.1.8) family. The complex is composed of two ATP-binding proteins (ModC), two transmembrane proteins (ModB) and a solute-binding protein (ModA).

It is found in the cell inner membrane. It carries out the reaction molybdate(out) + ATP + H2O = molybdate(in) + ADP + phosphate + H(+). Its function is as follows. Part of the ABC transporter complex ModABC involved in molybdenum import. Responsible for energy coupling to the transport system. This Azotobacter vinelandii protein is Molybdenum import ATP-binding protein ModC 1.